We begin with the raw amino-acid sequence, 268 residues long: Nickel import ATP-binding protein NikE (268 aa).

One can recognise an ABC transporter domain in the interval 4–252 (LNISGLSHHY…SSDAGRVLQN (249 aa)). Residue 45–52 (GRSGCGKS) participates in ATP binding.

This sequence belongs to the ABC transporter superfamily. Nickel importer (TC 3.A.1.5.3) family. As to quaternary structure, the complex is composed of two ATP-binding proteins (NikD and NikE), two transmembrane proteins (NikB and NikC) and a solute-binding protein (NikA).

Its subcellular location is the cell inner membrane. It carries out the reaction Ni(2+)(out) + ATP + H2O = Ni(2+)(in) + ADP + phosphate + H(+). Its function is as follows. Part of the ABC transporter complex NikABCDE involved in nickel import. Responsible for energy coupling to the transport system. The protein is Nickel import ATP-binding protein NikE of Escherichia coli (strain K12).